Consider the following 265-residue polypeptide: Mlc titration factor A (265 aa).

Positions 111, 148, 152, and 211 each coordinate Zn(2+).

Belongs to the MtfA family. As to quaternary structure, interacts with Mlc. Zn(2+) is required as a cofactor.

The protein localises to the cytoplasm. In terms of biological role, involved in the modulation of the activity of the glucose-phosphotransferase system (glucose-PTS). Interacts with the transcriptional repressor Mlc, preventing its interaction with DNA and leading to the modulation of expression of genes regulated by Mlc, including ptsG, which encodes the PTS system glucose-specific EIICB component. Shows zinc-dependent metallopeptidase activity. The sequence is that of Mlc titration factor A from Escherichia coli O139:H28 (strain E24377A / ETEC).